The following is a 317-amino-acid chain: Sperm acrosome membrane-associated protein 6 (317 aa).

The first 18 residues, 1-18 (MFVFIAKLLIFSSVITSA), serve as a signal peptide directing secretion. Topologically, residues 19–281 (FTCYQCFIDE…PSFSFWLPRP (263 aa)) are extracellular. 5 cysteine pairs are disulfide-bonded: Cys21-Cys143, Cys24-Cys146, Cys35-Cys51, Cys128-Cys151, and Cys132-Cys157. Asn29 carries an N-linked (GlcNAc...) asparagine glycan. One can recognise an Ig-like domain in the interval 123 to 237 (PRVSGCLPPC…EVLSQEQSLV (115 aa)). The N-linked (GlcNAc...) asparagine glycan is linked to Asn168. Cys174 and Cys227 are joined by a disulfide. The helical transmembrane segment at 282–302 (ALLITCLTATMLLIFLSLGAM) threads the bilayer. Residues 303–317 (CRLWYQIRTNVSNPA) lie on the Cytoplasmic side of the membrane.

This sequence belongs to the SPACA6 family. In terms of assembly, forms a complex with izumo1 and tmem81 on spermatocyte cell membrane. The complex binds to oocyte protein bncr. As to expression, expressed in testis.

The protein resides in the cytoplasmic vesicle. The protein localises to the secretory vesicle. It is found in the acrosome membrane. Its function is as follows. Sperm protein required for fusion of sperm with the egg membrane during fertilization. May regulate the expression of sperm surface protein DCST2. The polypeptide is Sperm acrosome membrane-associated protein 6 (Danio rerio (Zebrafish)).